The primary structure comprises 336 residues: tRNA(Ile)-lysidine synthase (336 aa).

40 to 45 contributes to the ATP binding site; it reads SGGQDS.

This sequence belongs to the tRNA(Ile)-lysidine synthase family.

The protein resides in the cytoplasm. The enzyme catalyses cytidine(34) in tRNA(Ile2) + L-lysine + ATP = lysidine(34) in tRNA(Ile2) + AMP + diphosphate + H(+). In terms of biological role, ligates lysine onto the cytidine present at position 34 of the AUA codon-specific tRNA(Ile) that contains the anticodon CAU, in an ATP-dependent manner. Cytidine is converted to lysidine, thus changing the amino acid specificity of the tRNA from methionine to isoleucine. This chain is tRNA(Ile)-lysidine synthase, found in Prochlorococcus marinus (strain SARG / CCMP1375 / SS120).